We begin with the raw amino-acid sequence, 122 residues long: MIQQESRLKVADNSGAREVLVIKVLGGSGRRYANIGDVVVATVKDATPGGVVKKGQVVKAVVVRTKRGVRRPDGSYIRFDENACVIIRDDKSPRGTRIFGPVARELRDKDFMKIISLAPEVI.

The protein belongs to the universal ribosomal protein uL14 family. In terms of assembly, part of the 50S ribosomal subunit. Forms a cluster with proteins L3 and L19. In the 70S ribosome, L14 and L19 interact and together make contacts with the 16S rRNA in bridges B5 and B8.

Its function is as follows. Binds to 23S rRNA. Forms part of two intersubunit bridges in the 70S ribosome. The polypeptide is Large ribosomal subunit protein uL14 (Geobacillus kaustophilus (strain HTA426)).